The primary structure comprises 657 residues: uncharacterized protein (657 aa).

Residues Ser518 and His631 each act as charge relay system in the active site.

The protein belongs to the peptidase S9C family.

This is an uncharacterized protein from Bacillus subtilis (strain 168).